The following is a 337-amino-acid chain: Methylthioribose-1-phosphate isomerase (337 aa).

Residues 51–53 (RGA), Arg-88, and Gln-187 contribute to the substrate site. The active-site Proton donor is Asp-228. 238 to 239 (NK) is a binding site for substrate.

It belongs to the eIF-2B alpha/beta/delta subunits family. MtnA subfamily.

It catalyses the reaction 5-(methylsulfanyl)-alpha-D-ribose 1-phosphate = 5-(methylsulfanyl)-D-ribulose 1-phosphate. It participates in amino-acid biosynthesis; L-methionine biosynthesis via salvage pathway; L-methionine from S-methyl-5-thio-alpha-D-ribose 1-phosphate: step 1/6. Its function is as follows. Catalyzes the interconversion of methylthioribose-1-phosphate (MTR-1-P) into methylthioribulose-1-phosphate (MTRu-1-P). This is Methylthioribose-1-phosphate isomerase from Anaeromyxobacter sp. (strain Fw109-5).